The primary structure comprises 606 residues: MAAAGLDTLRLEDSDDDFKYEEVDVMSDGEDDASEDLDAALRKLQQFTSKQEAATGPARTTEVKPGQVVKKPEVIDDFLRNFFIKMGLSRTCECFEAEWYELKATGRLDNSTTVPDVYLRNAELEDDVAGLRRELAEAKSIAGRASATWDKFRKERDFHRMHHKRVAQEKNKLLTDLRRLKEHYAKYEPTILELKKKYETLMKEKMMMSLERDKLAARVDALEQVASSPLPGAERSLGGQSTAAAGGGASGRALGATNRALTGDVPPAAGAAAAAATGRSGAVSAGPRSGWASLNAPPRRNPYADLEFPAAPVKMLSLNKTFKGHLLSVANLALHPTKPILVTASDDKTWKMWHMPGGDLIMCGEGHKDWVAGVDFHPAGTCLASGGGDSAVKIWDFEKQRCVTTFTDHKQAIWSVRFHHLGEVVASGSLDHTVRLWDLPAGKCRMALRGHVDSVNDLAWQPFSSSLATASSDKTVSVWDARAGLCTQTYYGHQNSCNGVSFNILGTQLASTDADGVVKLWDTRMTAEVATINTGKHPANKSCFDRSGQVLAVACDDGKVKAYSTTDGVLQAELAGHEDAVQAVLFDPAGQYLVSCGSDNTFRLWS.

The disordered stretch occupies residues 229 to 250 (PLPGAERSLGGQSTAAAGGGAS). WD repeat units lie at residues 324–354 (GHLLSVANLALHPTKPILVTASDDKTWKMWH), 366–396 (GHKDWVAGVDFHPAGTCLASGGGDSAVKIWD), 408–438 (DHKQAIWSVRFHHLGEVVASGSLDHTVRLWD), 450–480 (GHVDSVNDLAWQPFSSSLATASSDKTVSVWD), 492–522 (GHQNSCNGVSFNILGTQLASTDADGVVKLWD), 534–564 (TGKHPANKSCFDRSGQVLAVACDDGKVKAYS), and 576–606 (GHEDAVQAVLFDPAGQYLVSCGSDNTFRLWS).

Inter-microtubule bridges in flagella.

It is found in the cell projection. Its subcellular location is the cilium. It localises to the flagellum. This Chlamydomonas reinhardtii (Chlamydomonas smithii) protein is Flagellar WD repeat-containing protein Pf20 (PF20).